Here is a 398-residue protein sequence, read N- to C-terminus: Ribosomal RNA large subunit methyltransferase F (398 aa).

Residues 1–12 are compositionally biased toward basic residues; sequence MTPSRKPARPGA. The interval 1-85 is disordered; the sequence is MTPSRKPARP…RNLHGQGYDF (85 aa). 2 stretches are compositionally biased toward low complexity: residues 20-40 and 48-59; these read PSAK…AQPK and QAKSQAKPQAKS.

The protein belongs to the methyltransferase superfamily. METTL16/RlmF family.

Its subcellular location is the cytoplasm. The catalysed reaction is adenosine(1618) in 23S rRNA + S-adenosyl-L-methionine = N(6)-methyladenosine(1618) in 23S rRNA + S-adenosyl-L-homocysteine + H(+). Its function is as follows. Specifically methylates the adenine in position 1618 of 23S rRNA. The sequence is that of Ribosomal RNA large subunit methyltransferase F from Shewanella loihica (strain ATCC BAA-1088 / PV-4).